A 328-amino-acid chain; its full sequence is DNA-directed RNA polymerase subunit alpha (328 aa).

The segment at 1–234 (MQNSTTEFLK…DQMSIFADLQ (234 aa)) is alpha N-terminal domain (alpha-NTD). Residues 248–328 (IDPVLLRPVD…AWPPVGLEKP (81 aa)) form an alpha C-terminal domain (alpha-CTD) region.

This sequence belongs to the RNA polymerase alpha chain family. In terms of assembly, homodimer. The RNAP catalytic core consists of 2 alpha, 1 beta, 1 beta' and 1 omega subunit. When a sigma factor is associated with the core the holoenzyme is formed, which can initiate transcription.

It carries out the reaction RNA(n) + a ribonucleoside 5'-triphosphate = RNA(n+1) + diphosphate. DNA-dependent RNA polymerase catalyzes the transcription of DNA into RNA using the four ribonucleoside triphosphates as substrates. In Neisseria meningitidis serogroup A / serotype 4A (strain DSM 15465 / Z2491), this protein is DNA-directed RNA polymerase subunit alpha.